The chain runs to 72 residues: Inner membrane protein YmgF (72 aa).

Topologically, residues 1 to 9 (MNNSNNLDY) are cytoplasmic. Residues 10 to 30 (FTLYIIFSIAFMLITLLVILI) form a helical membrane-spanning segment. Topologically, residues 31-34 (AKPS) are periplasmic. Residues 35-55 (TGLGEVLVTINLLNALVWLAI) traverse the membrane as a helical segment. At 56–72 (NLVNRLRERLVNHRDQQ) the chain is on the cytoplasmic side.

Interacts with FtsL, FtsQ, FtsI, FtsN, and probably many other cell division proteins.

The protein resides in the cell inner membrane. In terms of biological role, could be involved in cell division. May participate in the stabilization of the cell divisome under specific conditions. The protein is Inner membrane protein YmgF (ymgF) of Escherichia coli (strain K12).